Reading from the N-terminus, the 179-residue chain is Large ribosomal subunit protein uL5 (179 aa).

The protein belongs to the universal ribosomal protein uL5 family. In terms of assembly, part of the 50S ribosomal subunit; part of the 5S rRNA/L5/L18/L25 subcomplex. Contacts the 5S rRNA and the P site tRNA. Forms a bridge to the 30S subunit in the 70S ribosome.

Its function is as follows. This is one of the proteins that bind and probably mediate the attachment of the 5S RNA into the large ribosomal subunit, where it forms part of the central protuberance. In the 70S ribosome it contacts protein S13 of the 30S subunit (bridge B1b), connecting the 2 subunits; this bridge is implicated in subunit movement. Contacts the P site tRNA; the 5S rRNA and some of its associated proteins might help stabilize positioning of ribosome-bound tRNAs. The chain is Large ribosomal subunit protein uL5 from Halorhodospira halophila (strain DSM 244 / SL1) (Ectothiorhodospira halophila (strain DSM 244 / SL1)).